Here is a 73-residue protein sequence, read N- to C-terminus: uncharacterized protein (73 aa).

This is an uncharacterized protein from Autographa californica nuclear polyhedrosis virus (AcMNPV).